A 286-amino-acid polypeptide reads, in one-letter code: MQLKVPEHQVAGHIAKDGKPGPLVDDKGRFFKPLQGDSRGEIEVKFYESFSSNTEVPEHIHRYFPVYHGTQAVEGSDGAAMMVLENLLAEYTKPSVMDVKMGSRTWYPDASEEYIQKCLKKDTGTTTVSSGFRISGFEVYDHKESSFWKPERKLLRGLDVDGARLTLRKFVSSNSLSDTGSKPDSAFASSVYGGSHGILTQLLELKTWFENQTLYHFNSCSILMVYENESILKGNDDDARPQVKLVDFAHVLDGNGVIDHNFLGGLCSFINFIREILQSPDESADS.

A disordered region spans residues 1 to 22; it reads MQLKVPEHQVAGHIAKDGKPGP.

It belongs to the inositol phosphokinase (IPK) family. In terms of processing, phosphorylated. In terms of tissue distribution, detected in leaves, stems, roots, siliques and flowers. Highly expressed in root tissues, anthers, the stigma, pollen grains and growing pollen tubes.

It localises to the nucleus. The protein resides in the cell membrane. The catalysed reaction is 1D-myo-inositol 1,4,5-trisphosphate + 2 ATP = 1D-myo-inositol 1,3,4,5,6-pentakisphosphate + 2 ADP + 2 H(+). It carries out the reaction 1D-myo-inositol 1,3,4,6-tetrakisphosphate + ATP = 1D-myo-inositol 1,3,4,5,6-pentakisphosphate + ADP + H(+). Inositol phosphate kinase with a broad substrate specificity. Phosphorylates inositol 1,4,5-trisphosphate (Ins(1,4,5)P3), inositol 1,4,5,6-tetrakisphosphate (Ins(1,4,5,6)P4), inositol 1,3,4,5-tetrakisphosphate (Ins(1,3,4,5)P4), inositol 1,3,4,6-tetrakisphosphate (Ins(1,3,4,6)P4) and inositol 1,2,3,4,6-pentakisphosphate (Ins(1,2,3,4,6)P5) but not inositol 1,4-bisphosphate (Ins(1,4)P2), inositol 1,3,4-trisphosphate (Ins(1,3,4)P3), inositol 1,2,6-trisphosphate (Ins(1,2,6)P3), inositol 3,4,5,6-tetrakisphosphate (Ins(3,4,5,6)P4), inositol 1,3,4,5,6-pentakisphosphate (Ins(1,3,4,5,6)P5), inositol 1,2,4,5,6-pentakisphosphate (Ins(1,2,4,5,6)P5) or inositol hexakisphosphate (InsP6). Regulates pollen and root development probably through the regulation of InsP3-mediated calcium accumulation. In Arabidopsis thaliana (Mouse-ear cress), this protein is Inositol polyphosphate multikinase alpha (IPK2a).